Here is a 176-residue protein sequence, read N- to C-terminus: Glyoxalase domain-containing protein RDO1 (176 aa).

The region spanning 53-172 (SLDHLVITCH…DNNLIELSSY (120 aa)) is the VOC domain. The Proton donor/acceptor role is filled by glutamate 168.

The protein belongs to the glyoxalase I family.

It participates in secondary metabolite biosynthesis. Glyoxalase domain-containing protein; part of the gene cluster that mediates the biosynthesis of itaconic acid and 2-hydroxyparaconate. Cis-aconitate is secreted by the mitochondrial tricarboxylate transporter MTT1. In the cytosol cis-aconitate is converted into trans-aconitate via isomerization by the aconitate-delta-isomerase ADI1. Decarboxylation of trans-aconitate by the trans-aconitate decarboxylase TAD1 then leads then to the production of itaconic acid. The cytochrome P450 monooxygenase CYP3 further converts itaconate to 2-hydroxyparaconate via oxidation of the double bond, leading to a transient epoxide, which can subsequently be lactonized to produce 2-hydroxyparaconate. Secretion of itaconate and possibly 2-hydroxyparaconate into the medium is mediated by the major facilitator ITP1. The glyoxalase domain-containing protein RDO1 is not involved in the biosynthesis of itaconate and 2-hydroxyparaconate, however, it might play a role in the further conversion of 2-hydroxyparaconate to itatartarate. This chain is Glyoxalase domain-containing protein RDO1, found in Mycosarcoma maydis (Corn smut fungus).